The sequence spans 469 residues: Phosphatidylcholine:ceramide cholinephosphotransferase 1 (469 aa).

A disordered region spans residues 40-177 (TTKIGPKLET…GDKPASPHDR (138 aa)). Basic and acidic residues-rich tracts occupy residues 72–91 (AAEK…HEET), 100–117 (SHHD…GDGK), and 162–177 (VRLE…PHDR). Helical transmembrane passes span 186–206 (LVAF…LSWI), 231–251 (LRLC…LILF), 262–282 (LCFI…VTPV), 300–320 (TFSL…LNLF), 327–347 (LCGD…ALFI), and 355–375 (FYIL…FLVL). Residue H336 is part of the active site. The Cytoplasmic portion of the chain corresponds to 376–469 (SHGHYTIDVI…RNGAARPAFE (94 aa)). Residues H379 and D383 contribute to the active site.

This sequence belongs to the sphingomyelin synthase family.

It localises to the golgi apparatus membrane. The enzyme catalyses an N-acylsphing-4-enine + a 1,2-diacyl-sn-glycero-3-phosphocholine = a sphingomyelin + a 1,2-diacyl-sn-glycerol. The catalysed reaction is an N-acyl-15-methylhexadecasphing-4-enine + a 1,2-diacyl-sn-glycero-3-phosphocholine = an N-acyl-15-methylhexadecasphing-4-enine-1-phosphocholine + a 1,2-diacyl-sn-glycerol. The protein operates within lipid metabolism; sphingolipid metabolism. Functionally, sphingomyelin synthases (SM synthase or SMS) synthesize the sphingolipid sphingomyelin (SM) through transfer of the phosphatidyl head group of 1,2-diacyl-sn-glycero-3-phosphocholine (phosphatidylcholine, PC) on to the primary hydroxyl of ceramide (N-acylsphingoid base), yielding 1,2-diacyl-sn-glycerol (diacylglycerol, DAG) as a side product. Functions as a bidirectional lipid cholinephosphotransferases capable of converting PC and ceramide to SM and DAG and vice versa depending on the respective levels of ceramide and DAG as phosphocholine acceptors, respectively. The polypeptide is Phosphatidylcholine:ceramide cholinephosphotransferase 1 (sms-1) (Caenorhabditis elegans).